Reading from the N-terminus, the 193-residue chain is Putative histone H2B type 2-C (193 aa).

The segment covering 1–12 has biased composition (low complexity); sequence MPEPAKFAPAPK. The interval 1-33 is disordered; the sequence is MPEPAKFAPAPKKGSKKAVTKAQKKDGKKRKRS. N-acetylproline is present on P2. K6 is modified (N6-(2-hydroxyisobutyryl)lysine; alternate). Residues K6 and K12 each carry the N6-(beta-hydroxybutyryl)lysine; alternate modification. 3 positions are modified to N6-acetyllysine; alternate: K6, K12, and K13. K6 is modified (N6-butyryllysine; alternate). K6, K12, and K13 each carry N6-crotonyllysine; alternate. 2 positions are modified to N6-lactoyllysine; alternate: K6 and K12. A Glycyl lysine isopeptide (Lys-Gly) (interchain with G-Cter in SUMO2); alternate cross-link involves residue K6. K13 carries the post-translational modification N6-(2-hydroxyisobutyryl)lysine; alternate. S15 is modified (phosphoserine; by STK4/MST1). An N6-acetyllysine; alternate mark is found at K16, K17, K21, and K24. 4 positions are modified to N6-crotonyllysine; alternate: K16, K17, K21, and K24. N6-lactoyllysine; alternate is present on residues K16, K17, K21, and K24. N6-(beta-hydroxybutyryl)lysine; alternate occurs at positions 17 and 21. Position 17 is an N6-glutaryllysine; alternate (K17). K21 and K24 each carry N6-(2-hydroxyisobutyryl)lysine; alternate. Position 21 is an N6-butyryllysine; alternate (K21). K21 is covalently cross-linked (Glycyl lysine isopeptide (Lys-Gly) (interchain with G-Cter in SUMO2); alternate). An N6-(2-hydroxyisobutyryl)lysine modification is found at K25. K35 carries the post-translational modification N6-(2-hydroxyisobutyryl)lysine; alternate. Position 35 is an N6-(beta-hydroxybutyryl)lysine; alternate (K35). K35 is subject to N6-crotonyllysine; alternate. K35 is modified (N6-glutaryllysine; alternate). N6-succinyllysine; alternate is present on K35. K35 is covalently cross-linked (Glycyl lysine isopeptide (Lys-Gly) (interchain with G-Cter in ubiquitin); alternate). S37 carries the phosphoserine; by AMPK modification. Residues K44, K47, and K58 each carry the N6-(2-hydroxyisobutyryl)lysine; alternate modification. K44 is modified (N6-lactoyllysine; alternate). An N6-glutaryllysine; alternate mark is found at K44 and K47. Position 47 is an N6-methyllysine; alternate (K47). An N6,N6-dimethyllysine; alternate modification is found at K58. The residue at position 80 (R80) is a Dimethylated arginine. K86 carries the post-translational modification N6-(2-hydroxyisobutyryl)lysine; alternate. N6-(beta-hydroxybutyryl)lysine; alternate is present on K86. An N6-acetyllysine; alternate modification is found at K86. K86 is modified (N6-lactoyllysine; alternate). K86 is subject to N6,N6,N6-trimethyllysine; alternate. Omega-N-methylarginine occurs at positions 87 and 93. The interval 111–136 is disordered; sequence PCPRAPRRSPSTPAPSESLPGPGARS.

It belongs to the histone H2B family. The nucleosome is a histone octamer containing two molecules each of H2A, H2B, H3 and H4 assembled in one H3-H4 heterotetramer and two H2A-H2B heterodimers. The octamer wraps approximately 147 bp of DNA. Post-translationally, phosphorylation at Ser-37 (H2BS36ph) by AMPK in response to stress promotes transcription. Phosphorylated on Ser-15 (H2BS14ph) by STK4/MST1 during apoptosis; which facilitates apoptotic chromatin condensation. Also phosphorylated on Ser-15 in response to DNA double strand breaks (DSBs), and in correlation with somatic hypermutation and immunoglobulin class-switch recombination. In terms of processing, crotonylation (Kcr) is specifically present in male germ cells and marks testis-specific genes in post-meiotic cells, including X-linked genes that escape sex chromosome inactivation in haploid cells. Crotonylation marks active promoters and enhancers and confers resistance to transcriptional repressors. It is also associated with post-meiotically activated genes on autosomes. Lactylated in macrophages by EP300/P300 by using lactoyl-CoA directly derived from endogenous or exogenous lactate, leading to stimulates gene transcription.

It localises to the nucleus. The protein resides in the chromosome. In terms of biological role, core component of nucleosome. Nucleosomes wrap and compact DNA into chromatin, limiting DNA accessibility to the cellular machineries which require DNA as a template. Histones thereby play a central role in transcription regulation, DNA repair, DNA replication and chromosomal stability. DNA accessibility is regulated via a complex set of post-translational modifications of histones, also called histone code, and nucleosome remodeling. This Homo sapiens (Human) protein is Putative histone H2B type 2-C.